We begin with the raw amino-acid sequence, 387 residues long: Zinc finger protein neuro-d4 (387 aa).

Residues lysine 106, lysine 129, and lysine 133 each participate in a glycyl lysine isopeptide (Lys-Gly) (interchain with G-Cter in SUMO2) cross-link. A C2H2-type zinc finger spans residues 195 to 218 (YVCDICGKRYKNRPGLSYHYTHTH). 2 PHD-type zinc fingers span residues 271–328 (NGYC…CKSC) and 325–375 (CKSC…CLRH). 16 residues coordinate Zn(2+): cysteine 274, cysteine 277, cysteine 293, cysteine 296, histidine 301, cysteine 304, cysteine 322, cysteine 325, cysteine 328, cysteine 331, cysteine 343, cysteine 346, histidine 351, cysteine 354, cysteine 369, and cysteine 372.

This sequence belongs to the requiem/DPF family. As to quaternary structure, component of neuron-specific chromatin remodeling complex (nBAF complex) composed of at least, ARID1A/BAF250A or ARID1B/BAF250B, SMARCD1/BAF60A, SMARCD3/BAF60C, SMARCA2/BRM/BAF190B, SMARCA4/BRG1/BAF190A, SMARCB1/BAF47, SMARCC1/BAF155, SMARCE1/BAF57, SMARCC2/BAF170, DPF1/BAF45B, DPF3/BAF45C, ACTL6B/BAF53B and actin. In terms of tissue distribution, at embryonic stages, predominant expression in the nervous system. Expressed specifically in postmitotic neurons (at protein level).

It is found in the cytoplasm. The protein resides in the nucleus. May have an important role in developing neurons by participating in regulation of cell survival, possibly as a neurospecific transcription factor. Belongs to the neuron-specific chromatin remodeling complex (nBAF complex). During neural development a switch from a stem/progenitor to a postmitotic chromatin remodeling mechanism occurs as neurons exit the cell cycle and become committed to their adult state. The transition from proliferating neural stem/progenitor cells to postmitotic neurons requires a switch in subunit composition of the npBAF and nBAF complexes. As neural progenitors exit mitosis and differentiate into neurons, npBAF complexes which contain ACTL6A/BAF53A and PHF10/BAF45A, are exchanged for homologous alternative ACTL6B/BAF53B and DPF1/BAF45B or DPF3/BAF45C subunits in neuron-specific complexes (nBAF). The npBAF complex is essential for the self-renewal/proliferative capacity of the multipotent neural stem cells. The nBAF complex along with CREST plays a role regulating the activity of genes essential for dendrite growth. The polypeptide is Zinc finger protein neuro-d4 (Mus musculus (Mouse)).